Consider the following 490-residue polypeptide: Probable alcohol acetyltransferase FCK4 (490 aa).

This sequence belongs to the alcohol acetyltransferase FCK4 family.

It participates in secondary metabolite biosynthesis. Its function is as follows. Probable alcohol acetyltransferase; part of the gene cluster that mediates the biosynthesis of cytokinins such as fusatin, fusatinic acids or 8-oxofusatin, known for their growth promoting and anti-senescence activities toward host plants. FCK1 is a bifunctional enzyme that performs the first steps in the biosynthesis of Fusarium cytokinins. It first condenses adenosine monophosphate (AMP) with dimethylallyl diphosphate (DMAPP) to yield isoprenyl adenosine monophosphate. It then catalyzes the removal of the phosphoribose to produce isopentenylaldehyde. The cytochrome P450 monooxygenase then converts isopentenylaldehyde to trans-zeatin. A condensation step converts trans-zeatin to fusatin which is further modified to produce fusatinic acid. The mechanism for oxidation of fusatin to fusatinic acid remains unknown. 8-oxofusatin could be produced through several pathways, via direct oxygenation of fusatin, or via the 8-oxo-pentenyladenine intermediate which itself must arise from either the prenylation of 8-oxo-AMP by FCK1 and/or oxygenation of isopentenylaldehyde. Both the FCK3 and FCK4 enzymes act downstream of the identified cytokinins to produce yet unidentified compounds. This Fusarium pseudograminearum (strain CS3096) (Wheat and barley crown-rot fungus) protein is Probable alcohol acetyltransferase FCK4.